Consider the following 88-residue polypeptide: PTS system cellobiose-specific EIIB component (88 aa).

A PTS EIIB type-3 domain is found at 3–88 (KKRIYLFCSA…IDTLLYGKVD (86 aa)). Cys-10 functions as the Phosphocysteine intermediate in the catalytic mechanism. Cys-10 is modified (phosphocysteine; by EIIA).

It localises to the cytoplasm. It catalyses the reaction D-cellobiose(out) + N(pros)-phospho-L-histidyl-[protein] = 6-phospho-beta-D-glucosyl-(1-&gt;4)-D-glucose(in) + L-histidyl-[protein]. Functionally, the phosphoenolpyruvate-dependent sugar phosphotransferase system (sugar PTS), a major carbohydrate active transport system, catalyzes the phosphorylation of incoming sugar substrates concomitantly with their translocation across the cell membrane. The enzyme II CelABD PTS system is involved in cellobiose transport. The chain is PTS system cellobiose-specific EIIB component from Aeromonas hydrophila.